Consider the following 665-residue polypeptide: UvrABC system protein B (665 aa).

The Helicase ATP-binding domain maps to 25 to 178 (ASLQAEHRFQ…RQLLRDLTTI (154 aa)). 38–45 (GATGTGKT) contributes to the ATP binding site. Positions 91–114 (YYDYYQPEAYIPVTDTYIEKTAAI) match the Beta-hairpin motif. Positions 429–595 (QVDDLLGEVR…PIVKKASNAI (167 aa)) constitute a Helicase C-terminal domain. In terms of domain architecture, UVR spans 626 to 661 (PELITQLEAQMKEAAKKLEFEEAAKYRDRIKQLRDK).

The protein belongs to the UvrB family. Forms a heterotetramer with UvrA during the search for lesions. Interacts with UvrC in an incision complex.

It localises to the cytoplasm. In terms of biological role, the UvrABC repair system catalyzes the recognition and processing of DNA lesions. A damage recognition complex composed of 2 UvrA and 2 UvrB subunits scans DNA for abnormalities. Upon binding of the UvrA(2)B(2) complex to a putative damaged site, the DNA wraps around one UvrB monomer. DNA wrap is dependent on ATP binding by UvrB and probably causes local melting of the DNA helix, facilitating insertion of UvrB beta-hairpin between the DNA strands. Then UvrB probes one DNA strand for the presence of a lesion. If a lesion is found the UvrA subunits dissociate and the UvrB-DNA preincision complex is formed. This complex is subsequently bound by UvrC and the second UvrB is released. If no lesion is found, the DNA wraps around the other UvrB subunit that will check the other stand for damage. The sequence is that of UvrABC system protein B from Cyanothece sp. (strain PCC 7425 / ATCC 29141).